The chain runs to 855 residues: Cone cGMP-specific 3',5'-cyclic phosphodiesterase subunit alpha' (855 aa).

GAF domains lie at 70–219 and 251–428; these read SVEL…SIIL and DVER…GWSL. Residues serine 92, serine 116, 164–167, and threonine 171 each bind 3',5'-cyclic GMP; that span reads DKQT. A PDEase domain is found at 481-814; the sequence is EEKQLVTILK…VEWKSLADEY (334 aa). Histidine 557 (proton donor) is an active-site residue. A divalent metal cation is bound by residues histidine 561, histidine 597, aspartate 598, and aspartate 718. The disordered stretch occupies residues 823-855; that stretch reads EMKKQEEGNTTEKAVEDSGGGGDDKKSKTCLML. Residue cysteine 852 is modified to Cysteine methyl ester. The S-geranylgeranyl cysteine moiety is linked to residue cysteine 852. A propeptide spans 853 to 855 (removed in mature form); that stretch reads LML.

Belongs to the cyclic nucleotide phosphodiesterase family. Composed of two alpha' subunits that are associated with 3 smaller proteins of 11, 13, and 15 kDa. A divalent metal cation serves as cofactor.

It localises to the cell membrane. The catalysed reaction is 3',5'-cyclic GMP + H2O = GMP + H(+). In terms of biological role, as cone-specific cGMP phosphodiesterase, it plays an essential role in light detection and cone phototransduction by rapidly decreasing intracellular levels of cGMP. In Bos taurus (Bovine), this protein is Cone cGMP-specific 3',5'-cyclic phosphodiesterase subunit alpha' (PDE6C).